The following is a 270-amino-acid chain: Dermonecrotic toxin LhSicTox-alphaIA2aiii (270 aa).

The active site involves His-2. Residues Glu-22 and Asp-24 each coordinate Mg(2+). The Nucleophile role is filled by His-38. 2 disulfides stabilise this stretch: Cys-42–Cys-48 and Cys-44–Cys-187. Asp-82 contacts Mg(2+).

It belongs to the arthropod phospholipase D family. Class II subfamily. Requires Mg(2+) as cofactor. In terms of tissue distribution, expressed by the venom gland.

The protein localises to the secreted. The catalysed reaction is an N-(acyl)-sphingosylphosphocholine = an N-(acyl)-sphingosyl-1,3-cyclic phosphate + choline. The enzyme catalyses an N-(acyl)-sphingosylphosphoethanolamine = an N-(acyl)-sphingosyl-1,3-cyclic phosphate + ethanolamine. It catalyses the reaction a 1-acyl-sn-glycero-3-phosphocholine = a 1-acyl-sn-glycero-2,3-cyclic phosphate + choline. It carries out the reaction a 1-acyl-sn-glycero-3-phosphoethanolamine = a 1-acyl-sn-glycero-2,3-cyclic phosphate + ethanolamine. Functionally, dermonecrotic toxins cleave the phosphodiester linkage between the phosphate and headgroup of certain phospholipids (sphingolipid and lysolipid substrates), forming an alcohol (often choline) and a cyclic phosphate. This toxin acts on sphingomyelin (SM). It may also act on ceramide phosphoethanolamine (CPE), lysophosphatidylcholine (LPC) and lysophosphatidylethanolamine (LPE), but not on lysophosphatidylserine (LPS), and lysophosphatidylglycerol (LPG). It acts by transphosphatidylation, releasing exclusively cyclic phosphate products as second products. Induces dermonecrosis, hemolysis, increased vascular permeability, edema, inflammatory response, and platelet aggregation. The sequence is that of Dermonecrotic toxin LhSicTox-alphaIA2aiii from Loxosceles hirsuta (Recluse spider).